A 253-amino-acid polypeptide reads, in one-letter code: Uridine phosphorylase (253 aa).

Belongs to the PNP/UDP phosphorylase family. In terms of assembly, homohexamer.

It localises to the cytoplasm. The enzyme catalyses uridine + phosphate = alpha-D-ribose 1-phosphate + uracil. It functions in the pathway pyrimidine metabolism; UMP biosynthesis via salvage pathway; uracil from uridine (phosphorylase route): step 1/1. Its function is as follows. Catalyzes the reversible phosphorylytic cleavage of uridine to uracil and ribose-1-phosphate. Shows weak activity towards deoxyuridine and thymidine. The produced molecules are then utilized as carbon and energy sources or in the rescue of pyrimidine bases for nucleotide synthesis. This chain is Uridine phosphorylase, found in Escherichia coli (strain K12).